The sequence spans 407 residues: Phosphopentomutase (407 aa).

Mn(2+) is bound by residues aspartate 10, aspartate 306, histidine 311, aspartate 347, histidine 348, and histidine 359.

This sequence belongs to the phosphopentomutase family. Requires Mn(2+) as cofactor.

It is found in the cytoplasm. The catalysed reaction is 2-deoxy-alpha-D-ribose 1-phosphate = 2-deoxy-D-ribose 5-phosphate. The enzyme catalyses alpha-D-ribose 1-phosphate = D-ribose 5-phosphate. It participates in carbohydrate degradation; 2-deoxy-D-ribose 1-phosphate degradation; D-glyceraldehyde 3-phosphate and acetaldehyde from 2-deoxy-alpha-D-ribose 1-phosphate: step 1/2. Its function is as follows. Isomerase that catalyzes the conversion of deoxy-ribose 1-phosphate (dRib-1-P) and ribose 1-phosphate (Rib-1-P) to deoxy-ribose 5-phosphate (dRib-5-P) and ribose 5-phosphate (Rib-5-P), respectively. The polypeptide is Phosphopentomutase (Shigella dysenteriae serotype 1 (strain Sd197)).